Reading from the N-terminus, the 396-residue chain is Argininosuccinate synthase (396 aa).

9–17 (AYSGGLDTS) provides a ligand contact to ATP. An L-citrulline-binding site is contributed by tyrosine 85. Glycine 115 contacts ATP. L-aspartate-binding residues include threonine 117, asparagine 121, and aspartate 122. Asparagine 121 serves as a coordination point for L-citrulline. The L-citrulline site is built by arginine 125, serine 173, glutamate 258, and tyrosine 270.

It belongs to the argininosuccinate synthase family. Type 1 subfamily. Homotetramer.

The protein localises to the cytoplasm. It catalyses the reaction L-citrulline + L-aspartate + ATP = 2-(N(omega)-L-arginino)succinate + AMP + diphosphate + H(+). Its pathway is amino-acid biosynthesis; L-arginine biosynthesis; L-arginine from L-ornithine and carbamoyl phosphate: step 2/3. This chain is Argininosuccinate synthase, found in Streptococcus agalactiae serotype Ia (strain ATCC 27591 / A909 / CDC SS700).